The primary structure comprises 379 residues: Sterol 24-C-methyltransferase erg-4 (379 aa).

This sequence belongs to the class I-like SAM-binding methyltransferase superfamily. Erg6/SMT family.

The catalysed reaction is lanosterol + S-adenosyl-L-methionine = eburicol + S-adenosyl-L-homocysteine + H(+). It functions in the pathway steroid metabolism; ergosterol biosynthesis. Its function is as follows. Catalyzes the methyl transfer from S-adenosyl-methionine to the C-24 of lanosterol to form eburicol. The protein is Sterol 24-C-methyltransferase erg-4 of Neurospora crassa (strain ATCC 24698 / 74-OR23-1A / CBS 708.71 / DSM 1257 / FGSC 987).